Reading from the N-terminus, the 255-residue chain is 6-phosphogluconolactonase 4 (255 aa).

This sequence belongs to the glucosamine/galactosamine-6-phosphate isomerase family. 6-phosphogluconolactonase subfamily.

It is found in the cytoplasm. The enzyme catalyses 6-phospho-D-glucono-1,5-lactone + H2O = 6-phospho-D-gluconate + H(+). Its pathway is carbohydrate degradation; pentose phosphate pathway; D-ribulose 5-phosphate from D-glucose 6-phosphate (oxidative stage): step 2/3. Its function is as follows. Involved in the pentose phosphate pathway via hydrolysis of 6-phosphogluconolactone to 6-phosphogluconate. The polypeptide is 6-phosphogluconolactonase 4 (Saccharomyces cerevisiae (strain ATCC 204508 / S288c) (Baker's yeast)).